Consider the following 73-residue polypeptide: Ocellatin-PT7 (73 aa).

Positions 1–22 (MAFLKKSLFLVLFLGLVSLSIC) are cleaved as a signal peptide. Residues 23 to 39 (DEEKRQDEDDDDDDDEE) constitute a propeptide that is removed on maturation.

As to expression, expressed by the skin glands.

The protein localises to the secreted. Has antibacterial activity against Gram-negative bacteria E.coli ATCC 25922 (MIC=60 uM) and S.choleraesuis ATCC 14028 (MIC=240 uM) and against Gram-positive bacterium S.aureus ATCC 29313 (MIC=240 uM). Shows no hemolytic activity and no cytotoxicity. The sequence is that of Ocellatin-PT7 from Leptodactylus pustulatus (Ceara white-lipped frog).